The following is a 307-amino-acid chain: Coproporphyrin III ferrochelatase (307 aa).

Fe-coproporphyrin III is bound by residues Y12, R29, 45 to 46 (RY), S53, and Y124. Residues H181 and E263 each coordinate Fe(2+).

This sequence belongs to the ferrochelatase family.

Its subcellular location is the cytoplasm. The enzyme catalyses Fe-coproporphyrin III + 2 H(+) = coproporphyrin III + Fe(2+). Its pathway is porphyrin-containing compound metabolism; protoheme biosynthesis. In terms of biological role, involved in coproporphyrin-dependent heme b biosynthesis. Catalyzes the insertion of ferrous iron into coproporphyrin III to form Fe-coproporphyrin III. It can also insert iron into protoporphyrin IX, but it has a much stronger preference for coproprophyrin III as the substrate. The sequence is that of Coproporphyrin III ferrochelatase from Staphylococcus aureus (strain NCTC 8325 / PS 47).